The primary structure comprises 308 residues: Cyclin-D4-1 (308 aa).

Belongs to the cyclin family. Cyclin D subfamily. As to quaternary structure, interacts with CDKA-1, CDKB2-1, KRP4/ICK7, KRP5/ICK3, KRP6/ICK4 and KRP7/ICK5. As to expression, expressed in shoot apical meristem, leaf primordia vascular tissues and tapetum of anthers.

Functionally, may activate cell cycle in the root apical meristem (RAM) and promote embryonic root (radicle) protrusion. This Arabidopsis thaliana (Mouse-ear cress) protein is Cyclin-D4-1 (CYCD4-1).